Here is a 292-residue protein sequence, read N- to C-terminus: Zinc finger protein OZF (292 aa).

C2H2-type zinc fingers lie at residues 16–38 (FACKVCGKVFSHKSNLTEHEHFH), 44–66 (FECNECGKAFSQKQYVIKHQNTH), 72–94 (FECNECGKSFSQKENLLTHQKIH), 100–122 (FECKDCGKAFIQKSNLIRHQRTH), 128–150 (FVCKECGKTFSGKSNLTEHEKIH), 156–178 (FKCSECGTAFGQKKYLIKHQNIH), 184–206 (YECNECGKAFSQRTSLIVHVRIH), 212–234 (YECNVCGKAFSQSSSLTVHVRSH), 240–262 (YGCNECGKAFSQFSTLALHLRIH), and 268–290 (YQCSECGKAFSQKSHHIRHQKIH). Residues Lys28, Lys51, and Lys56 each participate in a glycyl lysine isopeptide (Lys-Gly) (interchain with G-Cter in SUMO2) cross-link. Residues Lys157 and Lys169 each participate in a glycyl lysine isopeptide (Lys-Gly) (interchain with G-Cter in SUMO) cross-link. Lys173 is covalently cross-linked (Glycyl lysine isopeptide (Lys-Gly) (interchain with G-Cter in SUMO2)). The interaction with TERF2IP stretch occupies residues 212–292 (YECNVCGKAF…HIRHQKIHTH (81 aa)).

This sequence belongs to the krueppel C2H2-type zinc-finger protein family. Binds DNA. Interacts with SUMO conjugating enzyme UBC9/UBE2I. Interacts with the telomeric protein TERF2IP. Sumoylated. Liver, skeletal and heart muscle, mammary cells. Very low levels in brain, lung, placenta and kidney. Strongly overexpressed in many pancreas and colorectal cancers. Increased gene copy numbers are detected in 3 of 12 tumor cell lines and 2 of 12 primary pancreatic carcinomas. Overexpressed in 80% of colorectal cancers.

The protein localises to the nucleus. The chain is Zinc finger protein OZF (ZNF146) from Homo sapiens (Human).